The following is a 129-amino-acid chain: Histone H2A-III (129 aa).

This sequence belongs to the histone H2A family. The nucleosome is a histone octamer containing two molecules each of H2A, H2B, H3 and H4 assembled in one H3-H4 heterotetramer and two H2A-H2B heterodimers. The octamer wraps approximately 147 bp of DNA.

It is found in the nucleus. It localises to the chromosome. Functionally, core component of nucleosome. Nucleosomes wrap and compact DNA into chromatin, limiting DNA accessibility to the cellular machineries which require DNA as a template. Histones thereby play a central role in transcription regulation, DNA repair, DNA replication and chromosomal stability. DNA accessibility is regulated via a complex set of post-translational modifications of histones, also called histone code, and nucleosome remodeling. The polypeptide is Histone H2A-III (Volvox carteri (Green alga)).